Consider the following 1374-residue polypeptide: Mitogen-activated protein kinase kinase kinase 5 (1374 aa).

A disordered region spans residues 68-87; that stretch reads PAATSSSSATRGRGSSVGGG. Residues 69–81 are compositionally biased toward low complexity; sequence AATSSSSATRGRG. An asymmetric dimethylarginine; by PRMT1 mark is found at R78 and R80. S83 is modified (phosphoserine; by PIM1 and PKB/AKT1). The tract at residues 649 to 1374 is interaction with PPIA/CYPA; that stretch reads MVNTITEEKG…AIIDFRNKQT (726 aa). The region spanning 680–938 is the Protein kinase domain; it reads NGDRVVLGKG…ANDLLVDEFL (259 aa). ATP is bound by residues 686-694 and K709; that span reads LGKGTYGIV. Residue Y718 is modified to Phosphotyrosine. Catalysis depends on D803, which acts as the Proton acceptor. T813 is modified (phosphothreonine; by autocatalysis). A Phosphothreonine; by autocatalysis, MELK and MAP3K6 modification is found at T838. Phosphothreonine; by autocatalysis is present on T842. S958 carries the phosphoserine modification. At S966 the chain carries Phosphoserine; by autocatalysis. Phosphoserine is present on residues S1029 and S1033. Positions 1182–1209 are disordered; it reads SESDTADQEDLDVEDDHEEQPSNQTVRR. The segment covering 1185-1199 has biased composition (acidic residues); that stretch reads DTADQEDLDVEDDHE. Residues 1245–1285 adopt a coiled-coil conformation; it reads LGRMKIETNRLLEELVRKEKELQALLHRAIEEKDQEIKHLK.

It belongs to the protein kinase superfamily. STE Ser/Thr protein kinase family. MAP kinase kinase kinase subfamily. Homodimer when inactive. Binds both upstream activators and downstream substrates in multimolecular complexes. Part of a cytoplasmic complex made of HIPK1, DAB2IP and MAP3K5 in response to TNF. This complex formation promotes MAP3K5-JNK activation and subsequent apoptosis. Interacts with SOCS1 which recognizes phosphorylation of Tyr-718 and induces MAP3K5/ASK1 degradation in endothelial cells. Interacts with the 14-3-3 family proteins such as YWHAB, YWHAE, YWHAQ, YWHAH, YWHAZ and SFN. Interacts with ARRB2, BIRC2, DAB2IP, IGF1R, MAP3K6/ASK2, PGAM5, PIM1, PPP5C, SOCS1, STUB1, TRAF2, TRAF6 and TXN. Interacts with ERN1 in a TRAF2-dependent manner. Interacts with calcineurin subunit PPP3R1. Interacts with PPM1L. Interacts (via N-terminus) with RAF1 and this interaction inhibits the proapoptotic function of MAP3K5. Interacts with DAB2IP (via N-terminus C2 domain); the interaction occurs in a TNF-alpha-dependent manner. Interacts with DUSP13A; may positively regulate apoptosis. Interacts with DAXX. Interacts with RC3H2. Interacts with PPIA/CYPA. Interacts with PRMT1; the interaction results in MAP3K5 methylation by PRMT1 which inhibits MAP3K5 activation. Interacts with TRAF2; the interaction is inhibited by PRMT1. Interacts with TRIM48. As to quaternary structure, (Microbial infection) Interacts with HIV-1 Nef; this interaction inhibits MAP3K5 signaling. Mg(2+) is required as a cofactor. In terms of processing, phosphorylated at Thr-838 through autophosphorylation and by MAP3K6/ASK2 which leads to activation. Thr-838 is dephosphorylated by PPP5C. Ser-83 and Ser-1033 are inactivating phosphorylation sites, the former of which is phosphorylated by AKT1. Phosphorylated at Ser-966 which induces association of MAP3K5/ASK1 with the 14-3-3 family proteins and suppresses MAP3K5/ASK1 activity. Calcineurin (CN) dephosphorylates this site. Also dephosphorylated and activated by PGAM5. Phosphorylation at Ser-966 in response to oxidative stress is negatively regulated by PPIA/CYPA. Ubiquitinated. Tumor necrosis factor (TNF) induces TNFR2-dependent ubiquitination, leading to proteasomal degradation. Ubiquitinated by RC3H2 in a TRIM48-dependent manner. Post-translationally, methylation at Arg-78 and Arg-80 by PRMT1 promotes association of MAP3K5 with thioredoxin and negatively regulates MAP3K5 association with TRAF2, inhibiting MAP3K5 activation. Methylation is blocked by ubiquitination of PRMT1 by TRIM48. In terms of tissue distribution, abundantly expressed in heart and pancreas.

It is found in the cytoplasm. The protein localises to the endoplasmic reticulum. It carries out the reaction L-seryl-[protein] + ATP = O-phospho-L-seryl-[protein] + ADP + H(+). The catalysed reaction is L-threonyl-[protein] + ATP = O-phospho-L-threonyl-[protein] + ADP + H(+). Activated by various stressors, including oxidative stress, endoplasmic reticulum stress, and calcium overload, as well as by receptor-mediated inflammatory signals, such as the tumor necrosis factor (TNF) and lipopolysaccharide (LPS). Homophilic association of MAP3K5/ASK1 through the C-terminal coiled-coil domains and the heteromeric complex formation of MAP3K5/ASK1 with the reduced form of thioredoxin (TXN), constitutes an inactive form of the kinase. Upon ROS-induced dissociation of TXN from MAP3K5/ASK1, TRAF2 and TRAF6 are reciprocally recruited to MAP3K5/ASK1 and form the active MAP3K5/ASK1 signalosome, in which TRAF2 and TRAF6 appear to facilitate the active configuration of MAP3K5/ASK1. MAP3K5/ASK1 activity is also regulated through several phosphorylation and dephosphorylation events. Thr-838 is an activating phosphorylation site that is autophosphorylated and phosphorylated by MAP3K6/ASK2 and dephosphorylated by PPP5C. Ser-83 and Ser-1033 are inactivating phosphorylation sites, the former of which is phosphorylated by AKT1. Phosphorylation of Ser-966 induces association of MAP3K5/ASK1 with the 14-3-3 family proteins, which suppresses MAP3K5/ASK1 activity. Calcium/calmodulin-activated protein phosphatase calcineurin (PPP3CA) has been shown to directly dephosphorylate this site. SOCS1 binds to ASK1 by recognizing phosphorylation of Tyr-718 and induces MAP3K5/ASK1 degradation in endothelial cells. Also dephosphorylated and activated by PGAM5. Contains an N-terminal autoinhibitory domain. Once activated targeted for proteasomal degradation by RC3H2-mediated ubiquitination. Its function is as follows. Serine/threonine kinase which acts as an essential component of the MAP kinase signal transduction pathway. Plays an important role in the cascades of cellular responses evoked by changes in the environment. Mediates signaling for determination of cell fate such as differentiation and survival. Plays a crucial role in the apoptosis signal transduction pathway through mitochondria-dependent caspase activation. MAP3K5/ASK1 is required for the innate immune response, which is essential for host defense against a wide range of pathogens. Mediates signal transduction of various stressors like oxidative stress as well as by receptor-mediated inflammatory signals, such as the tumor necrosis factor (TNF) or lipopolysaccharide (LPS). Once activated, acts as an upstream activator of the MKK/JNK signal transduction cascade and the p38 MAPK signal transduction cascade through the phosphorylation and activation of several MAP kinase kinases like MAP2K4/SEK1, MAP2K3/MKK3, MAP2K6/MKK6 and MAP2K7/MKK7. These MAP2Ks in turn activate p38 MAPKs and c-jun N-terminal kinases (JNKs). Both p38 MAPK and JNKs control the transcription factors activator protein-1 (AP-1). The polypeptide is Mitogen-activated protein kinase kinase kinase 5 (MAP3K5) (Homo sapiens (Human)).